The primary structure comprises 264 residues: Gap junction beta-1 protein (264 aa).

The Cytoplasmic portion of the chain corresponds to 1–22 (MNWAGLYAILSGVNRHSTSIGR). A helical membrane pass occupies residues 23-45 (IWLSVVFIFRIMVLVAAAESVWG). The Extracellular portion of the chain corresponds to 46-75 (DEKSAFTCNTQQPGCNSVCYDHFFPISHIR). Residues 76–98 (LWALQLIIVSTPALLVAMHVAHL) form a helical membrane-spanning segment. Topologically, residues 99–130 (QHQEKKELRLSRHVKDQELAEVKKHKVKISGT) are cytoplasmic. A helical membrane pass occupies residues 131 to 153 (LWWTYISSVFFRIIFEAAFMYIF). Residues 154–191 (YLIYPGYSMIRLLKCDAYPCPNTVDCFVSRPTEKTIFT) lie on the Extracellular side of the membrane. Residues 192–214 (VFMLVASGVCIVLNVAEVFFLIA) form a helical membrane-spanning segment. Over 215 to 264 (QACTRRARRHRDSGSISKEHQQNEMNLLITGGSIIKRSAGQEKGDHCSTS) the chain is Cytoplasmic.

It belongs to the connexin family. Beta-type (group I) subfamily. A connexon is composed of a hexamer of connexins. Lung, liver, intestines, stomach and kidney.

Its subcellular location is the cell membrane. The protein resides in the cell junction. It is found in the gap junction. In terms of biological role, one gap junction consists of a cluster of closely packed pairs of transmembrane channels, the connexons, through which materials of low MW diffuse from one cell to a neighboring cell. In Xenopus laevis (African clawed frog), this protein is Gap junction beta-1 protein (gjb1).